The primary structure comprises 283 residues: Pantothenate synthetase (283 aa).

30 to 37 (MGYLHEGH) is a binding site for ATP. The active-site Proton donor is the histidine 37. Glutamine 61 contributes to the (R)-pantoate binding site. Residue glutamine 61 participates in beta-alanine binding. 147–150 (GRKD) is an ATP binding site. Glutamine 153 provides a ligand contact to (R)-pantoate. ATP-binding positions include valine 176 and 184 to 187 (MSSR).

It belongs to the pantothenate synthetase family. In terms of assembly, homodimer.

The protein resides in the cytoplasm. It carries out the reaction (R)-pantoate + beta-alanine + ATP = (R)-pantothenate + AMP + diphosphate + H(+). It participates in cofactor biosynthesis; (R)-pantothenate biosynthesis; (R)-pantothenate from (R)-pantoate and beta-alanine: step 1/1. In terms of biological role, catalyzes the condensation of pantoate with beta-alanine in an ATP-dependent reaction via a pantoyl-adenylate intermediate. In Syntrophotalea carbinolica (strain DSM 2380 / NBRC 103641 / GraBd1) (Pelobacter carbinolicus), this protein is Pantothenate synthetase.